Reading from the N-terminus, the 78-residue chain is Protein GPR15LG (78 aa).

Residues 1 to 24 (MRLLALSGLLCMLLLCFCIFSSEG) form the signal peptide. 2 disulfides stabilise this stretch: Cys-37/Cys-60 and Cys-38/Cys-57.

In terms of assembly, interacts with SUSD2; the interaction is direct. In terms of tissue distribution, highly abundant in the testis, colon, eye, and tongue. Detected in the epithelial layer of the colon, but not the small intestine.

The protein resides in the secreted. In terms of biological role, highly cationic protein that has multiple functions. Acts as a chemotactic factor that mediates lymphocytes recruitment to epithelia through binding and activation of the G-protein coupled receptor GPR15. May be a tumor suppressor; together with SUSD2 has a growth inhibitory effect on colon cancer cells which includes G1 cell cycle arrest. May regulate keratinocyte proliferation. In addition, through activation of Mas-related G protein-coupled receptors (MRGPRs) contributes to pruritogenesis by activating itch-selective sensory neurons and mast cells degranulation. Has antimicrobial activity against Gram-positive bacteria, including Staphylococcus aureus and Actinomyces spec., and Mycoplasma hominis and lentivirus. The polypeptide is Protein GPR15LG (Gpr15lg) (Mus musculus (Mouse)).